A 245-amino-acid chain; its full sequence is tRNA (guanine-N(7)-)-methyltransferase (245 aa).

S-adenosyl-L-methionine-binding positions include glycine 70, 93-94 (EI), 126-127 (NA), and leucine 146. Aspartate 149 is an active-site residue. 224–226 (SEE) is an S-adenosyl-L-methionine binding site.

The protein belongs to the class I-like SAM-binding methyltransferase superfamily. TrmB family.

The protein localises to the nucleus. The catalysed reaction is guanosine(46) in tRNA + S-adenosyl-L-methionine = N(7)-methylguanosine(46) in tRNA + S-adenosyl-L-homocysteine. It functions in the pathway tRNA modification; N(7)-methylguanine-tRNA biosynthesis. Its function is as follows. Catalyzes the formation of N(7)-methylguanine at position 46 (m7G46) in tRNA. The sequence is that of tRNA (guanine-N(7)-)-methyltransferase from Aedes aegypti (Yellowfever mosquito).